Reading from the N-terminus, the 452-residue chain is Transcription factor SMP1 (452 aa).

The 55-residue stretch at 3 to 57 (RRKIEIEPIKDDRNRTVTFIKRKAGLFKKAHELSVLCQVDIAVIILGSNNTFYEY) folds into the MADS-box domain. A DNA-binding region (mef2-type) is located at residues 58–87 (SSVDMSNLLNVHQNNTDLPHNIIEPSDYGD). The interval 97-142 (NERKRRRRRATVLQPASHSGSCTVSSQDSSSVQNNGNLSAPLASND) is disordered. The segment covering 115 to 127 (SGSCTVSSQDSSS) has biased composition (low complexity).

Belongs to the MEF2 family. In terms of assembly, can heterodimerize with RLM1. Interacts with HOG1. Phosphorylated by HOG1.

The protein localises to the nucleus. Its function is as follows. Transcription factor that controls part of the HOG1-mediated osmostress responses. Binds to the DNA sequence 5'-ACTACTA[TA](4)TAG-3'. Does not appear to function in the MPK1 pathway. The sequence is that of Transcription factor SMP1 (SMP1) from Saccharomyces cerevisiae (strain ATCC 204508 / S288c) (Baker's yeast).